The following is a 623-amino-acid chain: Interferon-induced GTP-binding protein Mx3 (623 aa).

The Dynamin-type G domain maps to 31–304; sequence DLALPAIAVI…LVHHIEKSLP (274 aa). A G1 motif region spans residues 41 to 48; that stretch reads GDQSSGKS. Position 41–48 (41–48) interacts with GTP; that stretch reads GDQSSGKS. Positions 66–68 are G2 motif; sequence VTR. The tract at residues 142 to 145 is G3 motif; that stretch reads DLPG. GTP is bound by residues 142–146 and 211–214; these read DLPGI and TKPD. Residues 211-214 form a G4 motif region; sequence TKPD. The tract at residues 243–246 is G5 motif; the sequence is KCRG. The region spanning 537 to 623 is the GED domain; the sequence is LQEMMLHLKS…MKARSYLVEF (87 aa).

The protein belongs to the TRAFAC class dynamin-like GTPase superfamily. Dynamin/Fzo/YdjA family.

It localises to the cytoplasm. Does not inhibit strain RB-1 of the fish pathogen, infectious hematopoietic necrosis virus (IHNV). This chain is Interferon-induced GTP-binding protein Mx3, found in Oncorhynchus mykiss (Rainbow trout).